Consider the following 1320-residue polypeptide: Junctional cadherin 5-associated protein (1320 aa).

8 disordered regions span residues 1 to 124 (MYSV…GSGS), 183 to 202 (KKPRELGRQASDGDGRKRPQ), 209 to 233 (YPFVHGEHTSQNRKKSQSLPRALSP), 252 to 426 (GVPK…SIQY), 452 to 492 (DDTS…NEQS), 676 to 720 (ASSP…PTPT), 741 to 802 (NQKP…STTG), and 835 to 942 (ELQE…QKSQ). 2 stretches are compositionally biased toward polar residues: residues 58 to 71 (RTSLGTGHVSNSEN) and 95 to 107 (NQPSLAWSSQPQS). Over residues 108–119 (GRDDIYWSRGRQ) the composition is skewed to basic and acidic residues. Residues 255 to 267 (KVPPYPPSFPSPS) show a composition bias toward pro residues. The segment covering 308–329 (FQDHQHRDPRGSYPTRSKDPSH) has biased composition (basic and acidic residues). The segment covering 338-356 (LEPPVYVPPPSYRSPPQHI) has biased composition (pro residues). Positions 369–378 (VSSNQSQQQV) are enriched in polar residues. A compositionally biased stretch (pro residues) spans 404–415 (GSPPQGLPPQPY). The segment covering 454–465 (TSYNPGLLTTQE) has biased composition (polar residues). Thr-484 carries the post-translational modification Phosphothreonine. The residue at position 486 (Ser-486) is a Phosphoserine. Residues 741–782 (NQKPSVPHLQGQTSLSPSRNSAFSRTSSAINQASMSKGTSDQ) show a composition bias toward polar residues. Residues 849–859 (EDSEAEQPEDC) show a composition bias toward acidic residues. Ser-851 carries the post-translational modification Phosphoserine. Residues 865–877 (KSWALQGTRTAQQ) are compositionally biased toward polar residues. Phosphoserine occurs at positions 1027 and 1033. 2 disordered regions span residues 1085–1116 (ARRTEQSQLPEPDASACNPSSSREDSSHSLAL) and 1153–1174 (SDVDGFPTSQATSPEPGKKDEE). A phosphoserine mark is found at Ser-1245 and Ser-1248. The disordered stretch occupies residues 1275-1320 (DEAWQAGHLPSVSQNENGHPEVPRDKMSDQDLWCADSYDPSRVERV). Basic and acidic residues predominate over residues 1292–1303 (GHPEVPRDKMSD).

The protein localises to the cell junction. It localises to the adherens junction. The chain is Junctional cadherin 5-associated protein from Mus musculus (Mouse).